Here is a 160-residue protein sequence, read N- to C-terminus: Bursicon (160 aa).

Positions 1–20 (MSVLNTFLVIVALILCYVND) are cleaved as a signal peptide. Residues 38 to 131 (CQECQMTAVI…PLQCMCRPCG (94 aa)) enclose the CTCK domain. 5 disulfide bridges follow: C41–C90, C55–C104, C65–C125, C69–C127, and C87–C130.

Heterodimer of burs and pburs.

The protein resides in the secreted. Final heterodimeric neurohormone released at the end of the molting cycle, involved in the sclerotization (tanning) of the insect cuticle, melanization and wing spreading. The sequence is that of Bursicon from Bombyx mori (Silk moth).